The primary structure comprises 392 residues: Putative nickel insertion protein (392 aa).

This sequence belongs to the LarC family.

In Pelobacter propionicus (strain DSM 2379 / NBRC 103807 / OttBd1), this protein is Putative nickel insertion protein.